Consider the following 166-residue polypeptide: Holin-like protein TcdE (166 aa).

Transmembrane regions (helical) follow at residues Ile15–His35, Ile36–Ala56, Met77–Phe97, and His111–Leu131.

The protein belongs to the bacteriophage holin family. As to quaternary structure, homomultimer.

Its subcellular location is the cell membrane. Functionally, holin-like protein required for secretion of toxins A and B (TcdA and TcdB). Facilitates the release of toxins to the extracellular environment without causing the bacterial cell lysis. Has weak activity, suggesting that it may act as a antiholin when multiple forms are produced. This chain is Holin-like protein TcdE, found in Clostridioides difficile (Peptoclostridium difficile).